The chain runs to 199 residues: NAD(P)H dehydrogenase (quinone) (199 aa).

The 187-residue stretch at 4 to 190 folds into the Flavodoxin-like domain; sequence VLVLYYSAYG…DAARFQGAHV (187 aa). FMN is bound by residues 10–15 and 78–80; these read SAYGHI and TRY. Y12 serves as a coordination point for NAD(+). Residue W98 participates in substrate binding. Residues 113–119 and H134 contribute to the FMN site; that span reads SSATQHG.

It belongs to the WrbA family. The cofactor is FMN.

It carries out the reaction a quinone + NADH + H(+) = a quinol + NAD(+). The enzyme catalyses a quinone + NADPH + H(+) = a quinol + NADP(+). The chain is NAD(P)H dehydrogenase (quinone) from Sinorhizobium fredii (strain NBRC 101917 / NGR234).